The primary structure comprises 438 residues: Adenylosuccinate synthetase (438 aa).

GTP contacts are provided by residues 12 to 18 (GDEGKGK) and 40 to 42 (GHT). Asp13 (proton acceptor) is an active-site residue. Residues Asp13 and Gly40 each contribute to the Mg(2+) site. IMP contacts are provided by residues 13 to 16 (DEGK), 38 to 41 (NAGH), Thr128, Arg142, Gln223, Thr238, and Arg302. Catalysis depends on His41, which acts as the Proton donor. 298–304 (TTTGRPR) contacts substrate. GTP contacts are provided by residues Arg304, 330 to 332 (KLD), and 412 to 414 (GVG).

This sequence belongs to the adenylosuccinate synthetase family. In terms of assembly, homodimer. Requires Mg(2+) as cofactor.

The protein localises to the cytoplasm. It carries out the reaction IMP + L-aspartate + GTP = N(6)-(1,2-dicarboxyethyl)-AMP + GDP + phosphate + 2 H(+). Its pathway is purine metabolism; AMP biosynthesis via de novo pathway; AMP from IMP: step 1/2. Its function is as follows. Plays an important role in the de novo pathway of purine nucleotide biosynthesis. Catalyzes the first committed step in the biosynthesis of AMP from IMP. This chain is Adenylosuccinate synthetase, found in Leifsonia xyli subsp. xyli (strain CTCB07).